We begin with the raw amino-acid sequence, 78 residues long: MVTVESTILQVKNRRHTAVIYVNESKIEVVDCTNSTNCRIQGVKGAGCPSYCPFVVDAKRYVQGLKTKYRVEVLNPNP.

This is an uncharacterized protein from Archaeoglobus fulgidus (strain ATCC 49558 / DSM 4304 / JCM 9628 / NBRC 100126 / VC-16).